The sequence spans 134 residues: Small ribosomal subunit protein uS8c (134 aa).

The protein belongs to the universal ribosomal protein uS8 family. As to quaternary structure, part of the 30S ribosomal subunit.

It localises to the plastid. It is found in the chloroplast. In terms of biological role, one of the primary rRNA binding proteins, it binds directly to 16S rRNA central domain where it helps coordinate assembly of the platform of the 30S subunit. The chain is Small ribosomal subunit protein uS8c (rps8) from Helianthus annuus (Common sunflower).